Reading from the N-terminus, the 163-residue chain is Phosphopantetheine adenylyltransferase (163 aa).

Position 11 (T11) interacts with substrate. ATP contacts are provided by residues 11–12 (TF) and H19. Substrate contacts are provided by K43, L75, and R89. ATP-binding positions include 90 to 92 (GLR), E100, and 125 to 131 (YSFISST).

It belongs to the bacterial CoaD family. In terms of assembly, homohexamer. Mg(2+) serves as cofactor.

The protein resides in the cytoplasm. The catalysed reaction is (R)-4'-phosphopantetheine + ATP + H(+) = 3'-dephospho-CoA + diphosphate. The protein operates within cofactor biosynthesis; coenzyme A biosynthesis; CoA from (R)-pantothenate: step 4/5. Functionally, reversibly transfers an adenylyl group from ATP to 4'-phosphopantetheine, yielding dephospho-CoA (dPCoA) and pyrophosphate. The sequence is that of Phosphopantetheine adenylyltransferase from Acinetobacter baumannii (strain SDF).